Here is a 680-residue protein sequence, read N- to C-terminus: MTEDNAQLRRTWNDLAEKVRYHRDRYYNEQPEIPDADFDALFKQLQQLEEDHPELAVPDSPTMVVGAPVAEQSSFDNVEHLERMLSLDNVFDEQELRDWLGRTPAKQYLTELKIDGLSIDLVYRNGQLERAATRGDGRVGEDITANARVIEDIPHQLQGTDEYPVPAVLEIRGEVFITVEDFPEVNAQRIADGGKPFANPRNAAAGSLRQKNIEDVKKRRLRMISHGIGFTEGFSPASQHDAYLALAAWGLPTSPYTEAVTDPEDVVKKVSYWADHRHDALHEMDGLVIKVDDIASQRALGSTSRAPRWAIAYKYPPEEVTTKLLDIQVGVGRTGRVTPFAVMEPVLVAGSTVSMATLHNQSEVKRKGVLIGDTVVIRKAGEVIPEVLGPVVELRDGTEREYIFPTLCPECGTRLAPAKADDVDWRCPNMQSCPGQLSTRLTYLAGRGAFDIEALGEKGAEDLIRTGILLDESGLFDLTEDDLLSSNVYTTNAGKVNASGKKLLDNLQKSKQTDLWRVLVALSIRHVGPTAARALAGRYHSIQALIDAPLEELSETDGVGTIIAQSFKDWFEVDWHKAIVDKWAAAGVTMEEEVGEVAEQTLEGLTIVVTGGLEGFTRDSVKEAIISRGGKASGSVSKKTDYVVIGENAGSKATKAEELGLRILDEAGFVRLLNTGSADE.

NAD(+)-binding positions include 35–39 (DADFD), 86–87 (SL), and Glu-111. The active-site N6-AMP-lysine intermediate is the Lys-113. Residues Arg-134, Glu-174, Lys-290, and Lys-314 each coordinate NAD(+). Zn(2+)-binding residues include Cys-408, Cys-411, Cys-427, and Cys-433. The BRCT domain occupies 597–680 (VAEQTLEGLT…RLLNTGSADE (84 aa)).

Belongs to the NAD-dependent DNA ligase family. LigA subfamily. Requires Mg(2+) as cofactor. Mn(2+) serves as cofactor.

The enzyme catalyses NAD(+) + (deoxyribonucleotide)n-3'-hydroxyl + 5'-phospho-(deoxyribonucleotide)m = (deoxyribonucleotide)n+m + AMP + beta-nicotinamide D-nucleotide.. Functionally, DNA ligase that catalyzes the formation of phosphodiester linkages between 5'-phosphoryl and 3'-hydroxyl groups in double-stranded DNA using NAD as a coenzyme and as the energy source for the reaction. It is essential for DNA replication and repair of damaged DNA. The polypeptide is DNA ligase (Corynebacterium glutamicum (strain ATCC 13032 / DSM 20300 / JCM 1318 / BCRC 11384 / CCUG 27702 / LMG 3730 / NBRC 12168 / NCIMB 10025 / NRRL B-2784 / 534)).